The chain runs to 155 residues: Ubiquinone biosynthesis protein COQ4 homolog, mitochondrial (155 aa).

The protein belongs to the COQ4 family. As to quaternary structure, component of a multi-subunit COQ enzyme complex. The cofactor is Zn(2+).

Its subcellular location is the mitochondrion inner membrane. It carries out the reaction a 4-hydroxy-3-methoxy-5-(all-trans-polyprenyl)benzoate + H(+) = a 2-methoxy-6-(all-trans-polyprenyl)phenol + CO2. It participates in cofactor biosynthesis; ubiquinone biosynthesis. Functionally, lyase that catalyzes the C1-decarboxylation of 4-hydroxy-3-methoxy-5-(all-trans-polyprenyl)benzoic acid into 2-methoxy-6-(all-trans-polyprenyl)phenol during ubiquinone biosynthesis. This Cryptosporidium hominis protein is Ubiquinone biosynthesis protein COQ4 homolog, mitochondrial.